The sequence spans 281 residues: Sulfur carrier protein FdhD (281 aa).

Residue Cys-117 is the Cysteine persulfide intermediate of the active site.

This sequence belongs to the FdhD family.

Its subcellular location is the cytoplasm. Functionally, required for formate dehydrogenase (FDH) activity. Acts as a sulfur carrier protein that transfers sulfur from IscS to the molybdenum cofactor prior to its insertion into FDH. The sequence is that of Sulfur carrier protein FdhD from Xanthomonas campestris pv. campestris (strain 8004).